A 285-amino-acid polypeptide reads, in one-letter code: Acetylglutamate kinase (285 aa).

Substrate-binding positions include 64–65 (GG), Arg-86, and Asn-179.

Belongs to the acetylglutamate kinase family. ArgB subfamily.

It localises to the plastid. Its subcellular location is the chloroplast. It catalyses the reaction N-acetyl-L-glutamate + ATP = N-acetyl-L-glutamyl 5-phosphate + ADP. It functions in the pathway amino-acid biosynthesis; L-arginine biosynthesis; N(2)-acetyl-L-ornithine from L-glutamate: step 2/4. Catalyzes the ATP-dependent phosphorylation of N-acetyl-L-glutamate. The sequence is that of Acetylglutamate kinase from Pyropia yezoensis (Susabi-nori).